The chain runs to 279 residues: NAD kinase (279 aa).

The Proton acceptor role is filled by Asp-61. NAD(+) contacts are provided by residues 61 to 62, 138 to 139, Lys-149, Lys-166, Asp-168, and 179 to 184; these read DG, ND, and TGYSFS.

Belongs to the NAD kinase family. A divalent metal cation serves as cofactor.

It localises to the cytoplasm. It carries out the reaction NAD(+) + ATP = ADP + NADP(+) + H(+). Functionally, involved in the regulation of the intracellular balance of NAD and NADP, and is a key enzyme in the biosynthesis of NADP. Catalyzes specifically the phosphorylation on 2'-hydroxyl of the adenosine moiety of NAD to yield NADP. This Borrelia garinii subsp. bavariensis (strain ATCC BAA-2496 / DSM 23469 / PBi) (Borreliella bavariensis) protein is NAD kinase.